Here is a 585-residue protein sequence, read N- to C-terminus: Pyruvate kinase (585 aa).

Arg-32 serves as a coordination point for substrate. The K(+) site is built by Asn-34, Ser-36, Asp-66, and Thr-67. Residue 34–37 (NFSH) coordinates ATP. ATP contacts are provided by Arg-73 and Lys-156. A Mg(2+)-binding site is contributed by Glu-221. The substrate site is built by Gly-244, Asp-245, and Thr-277. Position 245 (Asp-245) interacts with Mg(2+).

It belongs to the pyruvate kinase family. The protein in the C-terminal section; belongs to the PEP-utilizing enzyme family. The cofactor is Mg(2+). Requires K(+) as cofactor.

The enzyme catalyses pyruvate + ATP = phosphoenolpyruvate + ADP + H(+). It functions in the pathway carbohydrate degradation; glycolysis; pyruvate from D-glyceraldehyde 3-phosphate: step 5/5. This is Pyruvate kinase (pyk) from Staphylococcus aureus (strain MRSA252).